The primary structure comprises 441 residues: Trigger factor (441 aa).

A PPIase FKBP-type domain is found at 175–257 (GDFISLSLHV…VNAVIEVVAP (83 aa)).

This sequence belongs to the FKBP-type PPIase family. Tig subfamily.

The protein resides in the cytoplasm. The enzyme catalyses [protein]-peptidylproline (omega=180) = [protein]-peptidylproline (omega=0). Functionally, involved in protein export. Acts as a chaperone by maintaining the newly synthesized protein in an open conformation. Functions as a peptidyl-prolyl cis-trans isomerase. The polypeptide is Trigger factor (Chlamydia abortus (strain DSM 27085 / S26/3) (Chlamydophila abortus)).